The primary structure comprises 376 residues: Glucose-1-phosphate adenylyltransferase (376 aa).

Residues tyrosine 101, glycine 166, 181 to 182 (EK), and serine 192 contribute to the alpha-D-glucose 1-phosphate site.

The protein belongs to the bacterial/plant glucose-1-phosphate adenylyltransferase family. Homotetramer.

The enzyme catalyses alpha-D-glucose 1-phosphate + ATP + H(+) = ADP-alpha-D-glucose + diphosphate. Its pathway is glycan biosynthesis; glycogen biosynthesis. Its function is as follows. Involved in the biosynthesis of ADP-glucose, a building block required for the elongation reactions to produce glycogen. Catalyzes the reaction between ATP and alpha-D-glucose 1-phosphate (G1P) to produce pyrophosphate and ADP-Glc. This chain is Glucose-1-phosphate adenylyltransferase, found in Bacillus mycoides (strain KBAB4) (Bacillus weihenstephanensis).